The chain runs to 86 residues: MGQNQNKKSIFKGIKISIQLKYKSKNLFLIKKKKKITIRENVNFQNREKLNLMLCFCLIHIHVGGRSPSIQNSFFFFFFFFFFFFF.

The chain crosses the membrane as a helical span at residues 63–85 (VGGRSPSIQNSFFFFFFFFFFFF).

Its subcellular location is the membrane. This is an uncharacterized protein from Dictyostelium discoideum (Social amoeba).